We begin with the raw amino-acid sequence, 446 residues long: Tripartite motif-containing protein 43B (446 aa).

The segment at 15–56 (CVICLNYLVDPVTICCGHSFCRPCLCLSWEEAQSPANCPACR) adopts an RING-type zinc-finger fold. The B box-type zinc-finger motif lies at 88 to 129 (SEKQICGTHRQTKKMFCDMDKSLLCLLCSNSQEHGAHKHYPI). Residues C93, H96, C115, and H121 each contribute to the Zn(2+) site. Coiled-coil stretches lie at residues 129-158 (IEEAAEEDREKLLKQMRILWKKIQENQRNL) and 190-220 (LHKEEKQHLERLNKEYQEIFQQLQRSWVKMD). The region spanning 269–446 (ELTAGPITGL…VRPFFYTGHR (178 aa)) is the B30.2/SPRY domain.

Belongs to the TRIM/RBCC family.

This Homo sapiens (Human) protein is Tripartite motif-containing protein 43B (TRIM43B).